Reading from the N-terminus, the 135-residue chain is Large ribosomal subunit protein uL16c (135 aa).

Met-1 bears the N-methylmethionine mark.

In terms of assembly, component of the chloroplast large ribosomal subunit (LSU). Mature 70S chloroplast ribosomes of higher plants consist of a small (30S) and a large (50S) subunit. The 30S small subunit contains 1 molecule of ribosomal RNA (16S rRNA) and 24 different proteins. The 50S large subunit contains 3 rRNA molecules (23S, 5S and 4.5S rRNA) and 33 different proteins. Post-translationally, partially alpha-N-monomethylated at Met-1 (10%), whereas 90% of it is blocked to Edman degradation, probably by trimethylation.

The protein resides in the plastid. Its subcellular location is the chloroplast. Its function is as follows. Component of the chloroplast ribosome (chloro-ribosome), a dedicated translation machinery responsible for the synthesis of chloroplast genome-encoded proteins, including proteins of the transcription and translation machinery and components of the photosynthetic apparatus. This Spinacia oleracea (Spinach) protein is Large ribosomal subunit protein uL16c.